The following is a 60-amino-acid chain: Transcriptional regulatory protein SenN (60 aa).

Residues 11–31 constitute a DNA-binding region (H-T-H motif); that stretch reads RFRKRKTFGNQILPLELLIEK.

To B.subtilis SenS.

Its function is as follows. Regulates the expression of extracellular-protein genes of Bacillus natto. This chain is Transcriptional regulatory protein SenN (senN), found in Bacillus subtilis subsp. natto.